The primary structure comprises 151 residues: Deoxyuridine 5'-triphosphate nucleotidohydrolase (151 aa).

Residues 70-72 (RSG), asparagine 83, 87-89 (LID), and methionine 97 each bind substrate.

Belongs to the dUTPase family. Requires Mg(2+) as cofactor.

It catalyses the reaction dUTP + H2O = dUMP + diphosphate + H(+). The protein operates within pyrimidine metabolism; dUMP biosynthesis; dUMP from dCTP (dUTP route): step 2/2. This enzyme is involved in nucleotide metabolism: it produces dUMP, the immediate precursor of thymidine nucleotides and it decreases the intracellular concentration of dUTP so that uracil cannot be incorporated into DNA. The polypeptide is Deoxyuridine 5'-triphosphate nucleotidohydrolase (Azotobacter vinelandii (strain DJ / ATCC BAA-1303)).